The primary structure comprises 683 residues: ATP-dependent zinc metalloprotease FtsH 2 (683 aa).

A compositionally biased stretch (polar residues) spans 1–12 (MADQTSQNDNQN). The segment at 1 to 21 (MADQTSQNDNQNGSGLPGGGP) is disordered. Topologically, residues 1–28 (MADQTSQNDNQNGSGLPGGGPSGTGRGR) are cytoplasmic. The chain crosses the membrane as a helical span at residues 29–49 (LIIWVIAGTLLALWAYSYWGM). Topologically, residues 50–136 (GASGGERISY…VTKPESSFPW (87 aa)) are periplasmic. Residues 137 to 157 (GLVIMGLLPVLLLFGVGYIFL) traverse the membrane as a helical segment. Topologically, residues 158–683 (RRMQSQGQGL…ASGSADASGS (526 aa)) are cytoplasmic. 228–235 (GPPGTGKT) contributes to the ATP binding site. Histidine 450 serves as a coordination point for Zn(2+). Glutamate 451 is an active-site residue. 2 residues coordinate Zn(2+): histidine 454 and aspartate 526. The tract at residues 627–683 (VNGDTDEIGHMPTTNGAAASEENGSADDHEPDEATVIEEDGESGEGRASGSADASGS) is disordered. Over residues 655–669 (HEPDEATVIEEDGES) the composition is skewed to acidic residues. Low complexity predominate over residues 672 to 683 (GRASGSADASGS).

The protein in the central section; belongs to the AAA ATPase family. It in the C-terminal section; belongs to the peptidase M41 family. As to quaternary structure, homohexamer. It depends on Zn(2+) as a cofactor.

The protein localises to the cell inner membrane. Its function is as follows. Acts as a processive, ATP-dependent zinc metallopeptidase for both cytoplasmic and membrane proteins. Plays a role in the quality control of integral membrane proteins. This Salinibacter ruber (strain M8) protein is ATP-dependent zinc metalloprotease FtsH 2.